The following is a 372-amino-acid chain: UDP-N-acetylglucosamine--N-acetylmuramyl-(pentapeptide) pyrophosphoryl-undecaprenol N-acetylglucosamine transferase (372 aa).

UDP-N-acetyl-alpha-D-glucosamine contacts are provided by residues 15–17 (TGG), asparagine 126, arginine 169, serine 197, and glutamine 299.

The protein belongs to the glycosyltransferase 28 family. MurG subfamily.

It is found in the cell inner membrane. It catalyses the reaction di-trans,octa-cis-undecaprenyl diphospho-N-acetyl-alpha-D-muramoyl-L-alanyl-D-glutamyl-meso-2,6-diaminopimeloyl-D-alanyl-D-alanine + UDP-N-acetyl-alpha-D-glucosamine = di-trans,octa-cis-undecaprenyl diphospho-[N-acetyl-alpha-D-glucosaminyl-(1-&gt;4)]-N-acetyl-alpha-D-muramoyl-L-alanyl-D-glutamyl-meso-2,6-diaminopimeloyl-D-alanyl-D-alanine + UDP + H(+). Its pathway is cell wall biogenesis; peptidoglycan biosynthesis. In terms of biological role, cell wall formation. Catalyzes the transfer of a GlcNAc subunit on undecaprenyl-pyrophosphoryl-MurNAc-pentapeptide (lipid intermediate I) to form undecaprenyl-pyrophosphoryl-MurNAc-(pentapeptide)GlcNAc (lipid intermediate II). The sequence is that of UDP-N-acetylglucosamine--N-acetylmuramyl-(pentapeptide) pyrophosphoryl-undecaprenol N-acetylglucosamine transferase from Methylobacterium sp. (strain 4-46).